Reading from the N-terminus, the 247-residue chain is Triosephosphate isomerase (247 aa).

2 residues coordinate substrate: Asn10 and Lys12. Residue His94 is the Electrophile of the active site. Glu164 serves as the catalytic Proton acceptor.

This sequence belongs to the triosephosphate isomerase family. In terms of assembly, homodimer.

The catalysed reaction is D-glyceraldehyde 3-phosphate = dihydroxyacetone phosphate. It functions in the pathway carbohydrate biosynthesis; gluconeogenesis. Its pathway is carbohydrate degradation; glycolysis; D-glyceraldehyde 3-phosphate from glycerone phosphate: step 1/1. The protein is Triosephosphate isomerase (Tpi) of Culex tarsalis (Encephalitis mosquito).